Here is a 498-residue protein sequence, read N- to C-terminus: Glutamate--tRNA ligase (498 aa).

The 'HIGH' region motif lies at 12–22 (PSPTGHLHIGN). The short motif at 259-263 (KLSKR) is the 'KMSKS' region element. An ATP-binding site is contributed by Lys262.

Belongs to the class-I aminoacyl-tRNA synthetase family. Glutamate--tRNA ligase type 1 subfamily. As to quaternary structure, monomer.

It is found in the cytoplasm. It catalyses the reaction tRNA(Glu) + L-glutamate + ATP = L-glutamyl-tRNA(Glu) + AMP + diphosphate. Functionally, catalyzes the attachment of glutamate to tRNA(Glu) in a two-step reaction: glutamate is first activated by ATP to form Glu-AMP and then transferred to the acceptor end of tRNA(Glu). This Limosilactobacillus fermentum (strain NBRC 3956 / LMG 18251) (Lactobacillus fermentum) protein is Glutamate--tRNA ligase.